A 240-amino-acid chain; its full sequence is MSAYPQDTYFNSNPYQQQPYAYQPPPQPQPQQPPYQQQPYQQQAYQYNAQQPYQTTDPYAYQQSPPQSSTVPPQSPPVQVTHSPFIRTDSSQAVSFTDMARMAGRPQTFDEMYSVPESFLEIEIRNPMTHGIGRKMYTDYEIVCMTNIPAFKLRHSAVRRRYSDFEAFRDILERESTRVNIPPLPGKVFTNRFSDEVIEQRREGLQRFLEIVAGHPLLQTGSKVLCAFLQDPAWDKSQWI.

The interval 1–85 is disordered; it reads MSAYPQDTYF…PPVQVTHSPF (85 aa). A compositionally biased stretch (pro residues) spans 22-33; that stretch reads YQPPPQPQPQQP. Composition is skewed to low complexity over residues 34 to 54 and 62 to 84; these read PYQQQPYQQQAYQYNAQQPYQ and QQSPPQSSTVPPQSPPVQVTHSP. The PX domain occupies 118-235; that stretch reads SFLEIEIRNP…CAFLQDPAWD (118 aa). Residues R161, S163, K187, R192, and R201 each contribute to the a 1,2-diacyl-sn-glycero-3-phospho-(1D-myo-inositol-3-phosphate) site.

The protein belongs to the sorting nexin family.

Its subcellular location is the cytoplasm. The protein localises to the golgi apparatus membrane. It is found in the prevacuolar compartment membrane. Its function is as follows. Required for retention of late Golgi membrane proteins. Component of the retrieval machinery that functions by direct interaction with the cytosolic tails of certain TGN membrane proteins during the sorting/budding process at the prevacuolar compartment. Binds phosphatidylinositol 3-phosphate (PtdIns(P3)). The sequence is that of Sorting nexin-3 (SNX3) from Cryptococcus neoformans var. neoformans serotype D (strain JEC21 / ATCC MYA-565) (Filobasidiella neoformans).